We begin with the raw amino-acid sequence, 203 residues long: Casparian strip membrane protein 1 (203 aa).

Residue Ala-2 is modified to N-acetylalanine. The Cytoplasmic portion of the chain corresponds to 2-40 (AKESTTIDVGEPSTVTKSSSHVVKKKGFVAAAAGGGAKR). Residues 41-61 (GLAIFDFLLRLAAIGVTIGAA) form a helical membrane-spanning segment. The Extracellular portion of the chain corresponds to 62 to 92 (SVMYTAQETLPFFTQFLQFQAGYDDLPAFQY). Residues 93–113 (FVIAVAIVASYLVLSLPFSIV) form a helical membrane-spanning segment. Over 114–124 (TIVRPLAVAPR) the chain is Cytoplasmic. A helical transmembrane segment spans residues 125 to 145 (LILLIFDTLVVTLNTSAAAAA). Residues 146-177 (ASIVYLAHNGNQSTNWLPICQQFGDFCQNVST) lie on the Extracellular side of the membrane. N-linked (GlcNAc...) asparagine glycosylation is found at Asn-156 and Asn-174. The helical transmembrane segment at 178–198 (AVVAASIAILFFIVLIIISAI) threads the bilayer. The Cytoplasmic segment spans residues 199–203 (ALKRH).

Belongs to the Casparian strip membrane proteins (CASP) family. In terms of assembly, homodimer and heterodimers.

Its subcellular location is the cell membrane. Regulates membrane-cell wall junctions and localized cell wall deposition. Required for establishment of the Casparian strip membrane domain (CSD) and the subsequent formation of Casparian strips, a cell wall modification of the root endodermis that determines an apoplastic barrier between the intraorganismal apoplasm and the extraorganismal apoplasm and prevents lateral diffusion. In Arabidopsis lyrata subsp. lyrata (Lyre-leaved rock-cress), this protein is Casparian strip membrane protein 1.